Here is a 150-residue protein sequence, read N- to C-terminus: MARKDDLYQLLKPVVEGMGCDFWGMDYIAQGKRSLLRIYIDKESGVLVDDCEKVSRQISAILDVEDPIKGEYTLEVSSPGWDRPLFNVEQYKAYIGSIIEVRLQAPFNGRRKFKGLLAAVENDEIVLQVDAEEFIFPVETIDKANVVPQY.

It belongs to the RimP family.

The protein localises to the cytoplasm. Required for maturation of 30S ribosomal subunits. In Hahella chejuensis (strain KCTC 2396), this protein is Ribosome maturation factor RimP.